A 278-amino-acid polypeptide reads, in one-letter code: 2-dehydro-3-deoxyphosphooctonate aldolase (278 aa).

It belongs to the KdsA family.

It localises to the cytoplasm. It carries out the reaction D-arabinose 5-phosphate + phosphoenolpyruvate + H2O = 3-deoxy-alpha-D-manno-2-octulosonate-8-phosphate + phosphate. It functions in the pathway carbohydrate biosynthesis; 3-deoxy-D-manno-octulosonate biosynthesis; 3-deoxy-D-manno-octulosonate from D-ribulose 5-phosphate: step 2/3. Its pathway is bacterial outer membrane biogenesis; lipopolysaccharide biosynthesis. This chain is 2-dehydro-3-deoxyphosphooctonate aldolase, found in Bartonella tribocorum (strain CIP 105476 / IBS 506).